Here is a 257-residue protein sequence, read N- to C-terminus: Imidazole glycerol phosphate synthase subunit HisF (257 aa).

Catalysis depends on residues aspartate 11 and aspartate 130.

The protein belongs to the HisA/HisF family. In terms of assembly, heterodimer of HisH and HisF.

It is found in the cytoplasm. The catalysed reaction is 5-[(5-phospho-1-deoxy-D-ribulos-1-ylimino)methylamino]-1-(5-phospho-beta-D-ribosyl)imidazole-4-carboxamide + L-glutamine = D-erythro-1-(imidazol-4-yl)glycerol 3-phosphate + 5-amino-1-(5-phospho-beta-D-ribosyl)imidazole-4-carboxamide + L-glutamate + H(+). Its pathway is amino-acid biosynthesis; L-histidine biosynthesis; L-histidine from 5-phospho-alpha-D-ribose 1-diphosphate: step 5/9. Its function is as follows. IGPS catalyzes the conversion of PRFAR and glutamine to IGP, AICAR and glutamate. The HisF subunit catalyzes the cyclization activity that produces IGP and AICAR from PRFAR using the ammonia provided by the HisH subunit. The sequence is that of Imidazole glycerol phosphate synthase subunit HisF from Pseudoalteromonas translucida (strain TAC 125).